The chain runs to 256 residues: Major prion protein (256 aa).

The N-terminal stretch at Met1 to Cys24 is a signal peptide. The tract at residues Lys25–Ala233 is interaction with GRB2, ERI3 and SYN1. The disordered stretch occupies residues Pro28 to Thr110. Repeat copies occupy residues Pro54–Gln62, Pro63–Gln70, Pro71–Gln78, Pro79–Gln86, and Pro87–Gln95. The interval Pro54–Gln95 is 5 X 8 AA tandem repeats of P-H-G-G-G-W-G-Q. A compositionally biased stretch (gly residues) spans Gln55–Gly97. Positions 64, 65, 66, 72, 73, 74, 80, 81, 82, 88, 90, and 91 each coordinate Cu(2+). Cys182 and Cys217 are disulfide-bonded. N-linked (GlcNAc...) asparagine glycans are attached at residues Asn184 and Asn200. Ala233 is lipidated: GPI-anchor amidated alanine. Positions Ser234–Gly256 are cleaved as a propeptide — removed in mature form.

It belongs to the prion family. In terms of assembly, monomer and homodimer. Has a tendency to aggregate into amyloid fibrils containing a cross-beta spine, formed by a steric zipper of superposed beta-strands. Soluble oligomers may represent an intermediate stage on the path to fibril formation. Copper binding may promote oligomerization. Interacts with GRB2, APP, ERI3/PRNPIP and SYN1. Mislocalized cytosolically exposed PrP interacts with MGRN1; this interaction alters MGRN1 subcellular location and causes lysosomal enlargement. Interacts with KIAA1191.

Its subcellular location is the cell membrane. It localises to the golgi apparatus. Functionally, its primary physiological function is unclear. Has cytoprotective activity against internal or environmental stresses. May play a role in neuronal development and synaptic plasticity. May be required for neuronal myelin sheath maintenance. May play a role in iron uptake and iron homeostasis. Soluble oligomers are toxic to cultured neuroblastoma cells and induce apoptosis (in vitro). Association with GPC1 (via its heparan sulfate chains) targets PRNP to lipid rafts. Also provides Cu(2+) or Zn(2+) for the ascorbate-mediated GPC1 deaminase degradation of its heparan sulfate side chains. In Cervus elaphus (Red deer), this protein is Major prion protein (PRNP).